The sequence spans 430 residues: Proteasome-activating nucleotidase (430 aa).

Positions 9–89 (TELKKEKKAF…LRRELDRMRV (81 aa)) form a coiled coil. Residues 214-219 (GTGKTL) and His-353 contribute to the ATP site. The docks into pockets in the proteasome alpha-ring to cause gate opening stretch occupies residues 428–430 (LYR).

The protein belongs to the AAA ATPase family. As to quaternary structure, homohexamer. The hexameric complex has a two-ring architecture resembling a top hat that caps the 20S proteasome core at one or both ends. Alone, can form a complex composed of two stacked hexameric rings in vitro. Upon ATP-binding, the C-terminus of PAN interacts with the alpha-rings of the proteasome core by binding to the intersubunit pockets.

Its subcellular location is the cytoplasm. Its activity is regulated as follows. ATPase activity is inhibited by EDTA, N-ethylmaleimide (NEM) and p-chloromercuriphenyl-sulfonic acid (PCMS) in vitro. ATPase which is responsible for recognizing, binding, unfolding and translocation of substrate proteins into the archaeal 20S proteasome core particle. Is essential for opening the gate of the 20S proteasome via an interaction with its C-terminus, thereby allowing substrate entry and access to the site of proteolysis. Thus, the C-termini of the proteasomal ATPase function like a 'key in a lock' to induce gate opening and therefore regulate proteolysis. Unfolding activity requires energy from ATP hydrolysis, whereas ATP binding alone promotes ATPase-20S proteasome association which triggers gate opening, and supports translocation of unfolded substrates. In addition to ATP, is able to cleave other nucleotide triphosphates such as CTP, GTP and UTP, but hydrolysis of these other nucleotides is less effective in promoting proteolysis than ATP. Moreover, PAN by itself can function as a chaperone in vitro. In Methanocaldococcus jannaschii (strain ATCC 43067 / DSM 2661 / JAL-1 / JCM 10045 / NBRC 100440) (Methanococcus jannaschii), this protein is Proteasome-activating nucleotidase.